The primary structure comprises 234 residues: Multicopy suppressor of SEC21 protein 27 (234 aa).

Residues 1–47 (MQTPLESTDVKLDTLNEPSAHLIEKNVALPKDIFRSYLSYWIYEIAR) are Cytoplasmic-facing. Thr-3 bears the Phosphothreonine mark. The helical transmembrane segment at 48-68 (YTPVMILSLVIGVLVLLIIFF) threads the bilayer. Residues 69 to 72 (NDNE) lie on the Extracellular side of the membrane. A helical transmembrane segment spans residues 73-93 (ACVFNSAYYAYLSLVVLLIIL). Residues 94 to 234 (GDGNPKLVSR…NIDALLKKTE (141 aa)) are Cytoplasmic-facing. A COPI binding region spans residues 231-234 (KKTE).

The protein belongs to the DUP/COS family. Interacts with MST28. Binds to coatomer proteins of COPI and SEC23/SEC24 of COPII coated vesicles.

Its subcellular location is the endoplasmic reticulum. It localises to the golgi apparatus. It is found in the cytoplasmic vesicle. The protein resides in the COPI-coated vesicle membrane. The protein localises to the COPII-coated vesicle membrane. Involved in protein trafficking vesicle formation, probably by stabilizing of coatomer at the Golgi membrane and thus allowing the efficient formation of COPI coated vesicles. The sequence is that of Multicopy suppressor of SEC21 protein 27 (MST27) from Saccharomyces cerevisiae (strain ATCC 204508 / S288c) (Baker's yeast).